A 353-amino-acid chain; its full sequence is MKFALTGGGTGGHLSIAKALAIELEKQGIEAIYLGSTYGQDREWFENSPLFSERYFFNTQGVVNKSFFKKIGSLFLQAKAAFKAKEILKNHQITHTISVGGFSAGPASFASLLNKIPLYIHEQNAIKGSLNRYLSPKAKAVFSSYAFKDKGNHVLTSYPVQNAFFDCARTRTEIKHILFLGGSQGAKAINEFALLNAPKLTKQGIKITHICGSSAHERMRFFYQELGLLDKVELFAFHNNIIEVMHRADLCVSRAGASSVWELCANGLPTIFIPYPFASNNHQYYNVLEFEKENLCYVVPQNELLPKKLFEVIRKLNQKDDQGNKNLTTISTKLQQKIAKDGAKTIIETILNA.

Residues 10-12 (TGG), Asn124, Ser183, and Gln283 contribute to the UDP-N-acetyl-alpha-D-glucosamine site.

This sequence belongs to the glycosyltransferase 28 family. MurG subfamily.

It localises to the cell inner membrane. It carries out the reaction di-trans,octa-cis-undecaprenyl diphospho-N-acetyl-alpha-D-muramoyl-L-alanyl-D-glutamyl-meso-2,6-diaminopimeloyl-D-alanyl-D-alanine + UDP-N-acetyl-alpha-D-glucosamine = di-trans,octa-cis-undecaprenyl diphospho-[N-acetyl-alpha-D-glucosaminyl-(1-&gt;4)]-N-acetyl-alpha-D-muramoyl-L-alanyl-D-glutamyl-meso-2,6-diaminopimeloyl-D-alanyl-D-alanine + UDP + H(+). It functions in the pathway cell wall biogenesis; peptidoglycan biosynthesis. Its function is as follows. Cell wall formation. Catalyzes the transfer of a GlcNAc subunit on undecaprenyl-pyrophosphoryl-MurNAc-pentapeptide (lipid intermediate I) to form undecaprenyl-pyrophosphoryl-MurNAc-(pentapeptide)GlcNAc (lipid intermediate II). The protein is UDP-N-acetylglucosamine--N-acetylmuramyl-(pentapeptide) pyrophosphoryl-undecaprenol N-acetylglucosamine transferase of Helicobacter pylori (strain G27).